The sequence spans 178 residues: ATP synthase subunit delta (178 aa).

The protein belongs to the ATPase delta chain family. In terms of assembly, F-type ATPases have 2 components, F(1) - the catalytic core - and F(0) - the membrane proton channel. F(1) has five subunits: alpha(3), beta(3), gamma(1), delta(1), epsilon(1). F(0) has three main subunits: a(1), b(2) and c(10-14). The alpha and beta chains form an alternating ring which encloses part of the gamma chain. F(1) is attached to F(0) by a central stalk formed by the gamma and epsilon chains, while a peripheral stalk is formed by the delta and b chains.

The protein resides in the cell inner membrane. Its function is as follows. F(1)F(0) ATP synthase produces ATP from ADP in the presence of a proton or sodium gradient. F-type ATPases consist of two structural domains, F(1) containing the extramembraneous catalytic core and F(0) containing the membrane proton channel, linked together by a central stalk and a peripheral stalk. During catalysis, ATP synthesis in the catalytic domain of F(1) is coupled via a rotary mechanism of the central stalk subunits to proton translocation. Functionally, this protein is part of the stalk that links CF(0) to CF(1). It either transmits conformational changes from CF(0) to CF(1) or is implicated in proton conduction. The chain is ATP synthase subunit delta from Pseudomonas putida (strain ATCC 700007 / DSM 6899 / JCM 31910 / BCRC 17059 / LMG 24140 / F1).